The primary structure comprises 764 residues: Zinc finger CCCH domain-containing protein 24 (764 aa).

2 ANK repeats span residues 108–138 (EHRTPLMVAATYGSLAVLRLLLSLPSVDVNR) and 143–175 (DGTTALHCAASGGSPSCVEAVKLLLAAGADADA). The C3H1-type zinc finger occupies 321-348 (HYSCVPCPDFRKGVCRRGDMCEYAHGVF). Disordered regions lie at residues 616-665 (QREK…DWGV) and 698-732 (KESPPEKQVTTAESINSVGPSPLMPPSVSNGEGPS). Over residues 640-659 (SGVVGSPLSSSWSKWGSPSG) the composition is skewed to low complexity. Polar residues predominate over residues 705–716 (QVTTAESINSVG).

This is Zinc finger CCCH domain-containing protein 24 from Oryza sativa subsp. japonica (Rice).